A 527-amino-acid chain; its full sequence is Sensory neuron membrane protein 1 (527 aa).

The Cytoplasmic segment spans residues 1–10; sequence MQLQKPLKIG. A helical membrane pass occupies residues 11–31; it reads LGMMGAGLFGIIFGWVLFPVI. At 32–456 the chain is on the extracellular side; it reads LKSQLKKEMA…LKNQLFIPKR (425 aa). Asn-67 and Asn-229 each carry an N-linked (GlcNAc...) asparagine glycan. 3 disulfide bridges follow: Cys-268-Cys-333, Cys-297-Cys-352, and Cys-335-Cys-341. Asn-440 carries N-linked (GlcNAc...) asparagine glycosylation. The chain crosses the membrane as a helical span at residues 457–477; sequence IVSVVKWLLAGVGFVGLVGSL. Residues 478-527 are Cytoplasmic-facing; that stretch reads VYQFKGKMINFALSPSSAPVTKVNPEINQQNQPKDISIIGESQNPPKVDM.

This sequence belongs to the CD36 family. In terms of tissue distribution, principal component of the olfactory cilia membrane. Localizes to the antennal tissue with two to three fold higher expression in males compared to females.

The protein localises to the cell membrane. Its function is as follows. Plays an olfactory role that is not restricted to pheromone sensitivity. This chain is Sensory neuron membrane protein 1, found in Ostrinia nubilalis (European corn borer).